A 490-amino-acid chain; its full sequence is Phosphoglucosamine mutase (490 aa).

Ser-139 (phosphoserine intermediate) is an active-site residue. 4 residues coordinate Mg(2+): Ser-139, Asp-279, Asp-281, and Asp-283. Ser-139 carries the phosphoserine modification.

It belongs to the phosphohexose mutase family. Mg(2+) serves as cofactor. Post-translationally, activated by phosphorylation.

It catalyses the reaction alpha-D-glucosamine 1-phosphate = D-glucosamine 6-phosphate. Its function is as follows. Catalyzes the conversion of glucosamine-6-phosphate to glucosamine-1-phosphate. This chain is Phosphoglucosamine mutase, found in Nostoc punctiforme (strain ATCC 29133 / PCC 73102).